Consider the following 75-residue polypeptide: Large ribosomal subunit protein uL24c (75 aa).

This sequence belongs to the universal ribosomal protein uL24 family. In terms of assembly, part of the 50S ribosomal subunit.

The protein resides in the plastid. The protein localises to the chloroplast. Its function is as follows. One of two assembly initiator proteins, it binds directly to the 5'-end of the 23S rRNA, where it nucleates assembly of the 50S subunit. In Cyanidioschyzon merolae (strain NIES-3377 / 10D) (Unicellular red alga), this protein is Large ribosomal subunit protein uL24c (rpl24).